Consider the following 277-residue polypeptide: Myelin proteolipid protein (277 aa).

Residues 2 to 10 (GLLECCARC) lie on the Cytoplasmic side of the membrane. 3 S-palmitoyl cysteine lipidation sites follow: C6, C7, and C10. Residues 11 to 36 (LIGAPFASLVATGLCFFGVALFCGCG) form a helical membrane-spanning segment. At 37-59 (HEALTGTEQLIETYFSKNYQDYE) the chain is on the extracellular side. Residues 60–88 (YLIDVIHAFQYVIYGTASFFFLYGALLLA) form a helical membrane-spanning segment. At 89–151 (EGFYTTGAVR…LGKWLGHPDK (63 aa)) the chain is on the cytoplasmic side. S-palmitoyl cysteine attachment occurs at residues C109, C139, and C141. Residues 152-178 (FVGITYVLTIVWLLAFACSAVPVYIYF) form a helical membrane-spanning segment. Residues 179-238 (NTWTTCQSIAFPTKTTASIGTLCADARMYGVLPWNAFPGKVCGSNLLSICKTSEFQMTFH) are Extracellular-facing. Intrachain disulfides connect C184-C228 and C201-C220. A lipid anchor (O-palmitoyl threonine) is attached at T199. The chain crosses the membrane as a helical span at residues 239–268 (LFIAAFVGAAATLVSLLTFMIAATYNFAVL). The Cytoplasmic segment spans residues 269–277 (KLMGRGTKF).

This sequence belongs to the myelin proteolipid protein family.

It localises to the cell membrane. Its function is as follows. This is the major myelin protein from the central nervous system. It plays an important role in the formation or maintenance of the multilamellar structure of myelin. This is Myelin proteolipid protein (PLP1) from Gallus gallus (Chicken).